A 295-amino-acid polypeptide reads, in one-letter code: Putative 23S rRNA (guanine-N(1)-)-methyltransferase (295 aa).

Residues C11, C14, C31, and H35 each contribute to the Zn(2+) site. Residues Y74, 116–117, and H204 each bind S-adenosyl-L-methionine; that span reads TG.

The protein belongs to the methyltransferase superfamily. RlmA family.

Confers strong resistance to mycinamicin (MM) and tylosin (TY). May function as methyltransferase. The polypeptide is Putative 23S rRNA (guanine-N(1)-)-methyltransferase (myrA) (Micromonospora griseorubida).